A 102-amino-acid polypeptide reads, in one-letter code: UPF0122 protein MPN_424 (102 aa).

It belongs to the UPF0122 family.

Might take part in the signal recognition particle (SRP) pathway. This is inferred from the conservation of its genetic proximity to ftsY/ffh. May be a regulatory protein. The sequence is that of UPF0122 protein MPN_424 from Mycoplasma pneumoniae (strain ATCC 29342 / M129 / Subtype 1) (Mycoplasmoides pneumoniae).